The chain runs to 461 residues: Argininosuccinate lyase (461 aa).

The protein belongs to the lyase 1 family. Argininosuccinate lyase subfamily. In terms of assembly, homotetramer.

It localises to the cytoplasm. It carries out the reaction 2-(N(omega)-L-arginino)succinate = fumarate + L-arginine. It functions in the pathway amino-acid biosynthesis; L-arginine biosynthesis; L-arginine from L-ornithine and carbamoyl phosphate: step 3/3. This Nostoc punctiforme (strain ATCC 29133 / PCC 73102) protein is Argininosuccinate lyase.